A 296-amino-acid polypeptide reads, in one-letter code: uncharacterized protein (296 aa).

The HTH lysR-type domain maps to 1-60 (MDPKISYFQTFIVASKTKSFSKAAKRLGITQGTVSNHISALEKYFDAQLFLRTPEGVDLT). Positions 20–39 (FSKAAKRLGITQGTVSNHIS) form a DNA-binding region, H-T-H motif.

Belongs to the LysR transcriptional regulatory family.

This is an uncharacterized protein from Methanocaldococcus jannaschii (strain ATCC 43067 / DSM 2661 / JAL-1 / JCM 10045 / NBRC 100440) (Methanococcus jannaschii).